Consider the following 238-residue polypeptide: Type III pantothenate kinase (238 aa).

6–13 (DSGNTRIK) is an ATP binding site. Residues tyrosine 90 and 97 to 100 (GVDR) each bind substrate. Residue aspartate 99 is the Proton acceptor of the active site. Threonine 122 is an ATP binding site. Threonine 172 is a binding site for substrate.

This sequence belongs to the type III pantothenate kinase family. In terms of assembly, homodimer. Requires NH4(+) as cofactor. It depends on K(+) as a cofactor.

The protein localises to the cytoplasm. The enzyme catalyses (R)-pantothenate + ATP = (R)-4'-phosphopantothenate + ADP + H(+). Its pathway is cofactor biosynthesis; coenzyme A biosynthesis; CoA from (R)-pantothenate: step 1/5. Functionally, catalyzes the phosphorylation of pantothenate (Pan), the first step in CoA biosynthesis. In Dechloromonas aromatica (strain RCB), this protein is Type III pantothenate kinase.